Here is a 933-residue protein sequence, read N- to C-terminus: Progesterone receptor (933 aa).

The AF3; mediates transcriptional activation stretch occupies residues M1 to L164. The tract at residues M1–V256 is disordered. The modulating, Pro-Rich stretch occupies residues M1–I566. Residue S20 is modified to Phosphoserine. The short motif at L55–L59 is the LXXL motif 1 element. S81 carries the phosphoserine modification. Positions L115–L119 match the LXXL motif 2 motif. Residues S130 and S162 each carry the phosphoserine modification. The mediates transcriptional transrepression stretch occupies residues M165–H305. The Nuclear localization signal motif lies at K183 to R187. Phosphoserine is present on residues S190 and S213. The segment covering E220 to E231 has biased composition (acidic residues). A compositionally biased stretch (low complexity) spans S232 to G246. S294 carries the post-translational modification Phosphoserine; by MAPK1. The interval G331–S378 is disordered. Residues A335–S350 show a composition bias toward low complexity. A Phosphoserine; by MAPK modification is found at S345. Residue K388 forms a Glycyl lysine isopeptide (Lys-Gly) (interchain with G-Cter in SUMO); alternate linkage. Residue K388 forms a Glycyl lysine isopeptide (Lys-Gly) (interchain with G-Cter in ubiquitin); alternate linkage. S400 carries the phosphoserine; by CDK2 modification. Positions P415 to S452 are disordered. Over residues P418–R433 the composition is skewed to pro residues. Positions P434–S452 are enriched in low complexity. An AF1; mediates transcriptional activation region spans residues S456–R546. Residue K531 forms a Glycyl lysine isopeptide (Lys-Gly) (interchain with G-Cter in SUMO) linkage. NR C4-type zinc fingers lie at residues C567–C587 and C603–C627. A DNA-binding region (nuclear receptor) is located at residues C567–F639. Position 676 is a phosphoserine (S676). Residues Q679 to I913 enclose the NR LBD domain. The interval L687 to K933 is AF2; mediates transcriptional activation. Progesterone is bound at residue R766.

The protein belongs to the nuclear hormone receptor family. In terms of assembly, interacts with SMARD1 and UNC45A. Interacts with CUEDC2; the interaction promotes ubiquitination, decreases sumoylation, and represses transcriptional activity. Interacts with PIAS3; the interaction promotes sumoylation of PR in a hormone-dependent manner, inhibits DNA-binding, and alters nuclear export. Interacts with SP1; the interaction requires ligand-induced phosphorylation on Ser-345 by ERK1/2-MAPK. Interacts with PRMT2. Interacts with NCOA2 and NCOA1. Interacts with KLF9. Interacts with GTF2B. Phosphorylated on multiple serine sites. Several of these sites are hormone-dependent. Phosphorylation on Ser-294 is highly hormone-dependent and modulates ubiquitination and sumoylation on Lys-388. Phosphorylation on Ser-102 and Ser-345 also requires induction by hormone. Basal phosphorylation on Ser-81, Ser-162, Ser-190 and Ser-400 is increased in response to progesterone and can be phosphorylated in vitro by the CDK2-A1 complex. Increased levels of phosphorylation on Ser-400 also in the presence of EGF, heregulin, IGF, PMA and FBS. Phosphorylation at this site by CDK2 is ligand-independent, and increases nuclear translocation and transcriptional activity. Phosphorylation at Ser-162 and Ser-294, but not at Ser-190, is impaired during the G(2)/M phase of the cell cycle. Phosphorylation on Ser-345 by ERK1/2 MAPK is required for interaction with SP1. Post-translationally, sumoylation is hormone-dependent and represses transcriptional activity. Sumoylation on all three sites is enhanced by PIAS3. Desumoylated by SENP1. Sumoylation on Lys-388, the main site of sumoylation, is repressed by ubiquitination on the same site, and modulated by phosphorylation at Ser-294. In terms of processing, ubiquitination is hormone-dependent and represses sumoylation on the same site. Promoted by MAPK-mediated phosphorylation on Ser-294. Ubiquitinated by UBR5, leading to its degradation: UBR5 specifically recognizes and binds ligand-bound PGR when it is not associated with coactivators (NCOAs). In presence of NCOAs, the UBR5-degron is not accessible, preventing its ubiquitination and degradation. Palmitoylated by ZDHHC7 and ZDHHC21. Palmitoylation is required for plasma membrane targeting and for rapid intracellular signaling via ERK and AKT kinases and cAMP generation.

The protein localises to the nucleus. It localises to the cytoplasm. Its function is as follows. The steroid hormones and their receptors are involved in the regulation of eukaryotic gene expression and affect cellular proliferation and differentiation in target tissues. Transcriptional activator of several progesteron-dependent promoters in a variety of cell types. Involved in activation of SRC-dependent MAPK signaling on hormone stimulation. This is Progesterone receptor (PGR) from Gorilla gorilla gorilla (Western lowland gorilla).